Here is a 196-residue protein sequence, read N- to C-terminus: Adenylate kinase (196 aa).

Residue 9 to 17 (GIPGVGKST) coordinates ATP.

Belongs to the archaeal adenylate kinase family.

Its subcellular location is the cytoplasm. The catalysed reaction is AMP + ATP = 2 ADP. The protein is Adenylate kinase of Pyrococcus furiosus (strain ATCC 43587 / DSM 3638 / JCM 8422 / Vc1).